The following is a 109-amino-acid chain: MKLSIIIIATSLVIAVVAFPSKDSKAIENDKTEQRMEIVVQETARACSKQIGDKCKRNCECCGKTVVCGTIYVGGKEVNQCMDKTSDNAILNGLGKGMNFIENTFSFCV.

An N-terminal signal peptide occupies residues 1–18 (MKLSIIIIATSLVIAVVA). Positions 19 to 46 (FPSKDSKAIENDKTEQRMEIVVQETARA) are excised as a propeptide. 4 disulfides stabilise this stretch: Cys-47–Cys-62, Cys-55–Cys-68, Cys-59–Cys-108, and Cys-61–Cys-81.

This sequence belongs to the neurotoxin 25 family. F7 subfamily. As to expression, expressed by the venom gland.

Its subcellular location is the secreted. Functionally, putative ion channel inhibitor. This Cyriopagopus hainanus (Chinese bird spider) protein is Hainantoxin-XVIII.